The following is a 1239-amino-acid chain: WD repeat-containing protein 11 (1239 aa).

WD repeat units follow at residues 63–112 (RHKA…AHCE), 115–158 (EHSK…KLWK), 358–398 (TKTV…SKSS), 476–515 (RMCP…LHKE), 571–610 (NDEP…LLRE), 713–750 (GSMG…SRGV), 752–792 (THRG…MVSS), 798–836 (NVNY…ASYR), and 898–944 (SLSN…IQAF). The segment at 1213-1239 (EDLSQTEGTGTESSPADDTDNSLVNIE) is disordered. The segment covering 1215–1226 (LSQTEGTGTESS) has biased composition (polar residues).

In terms of assembly, component of the complex WDR11.

The protein localises to the cytoplasm. The protein resides in the cytoskeleton. Its subcellular location is the cilium basal body. It is found in the nucleus. It localises to the cilium axoneme. The protein localises to the cytoplasmic vesicle. The protein resides in the golgi apparatus. Its subcellular location is the trans-Golgi network. In terms of biological role, involved in the Hedgehog (Hh) signaling pathway, is essential for normal ciliogenesis. Regulates the proteolytic processing of gli3 and cooperates with the transcription factor emx1 in the induction of downstream Hh pathway gene expression and gonadotropin-releasing hormone production. WDR11 complex facilitates the tethering of Adaptor protein-1 complex (AP-1)-derived vesicles. In Danio rerio (Zebrafish), this protein is WD repeat-containing protein 11 (wdr11).